The sequence spans 352 residues: Glycogen synthase kinase 3 (352 aa).

Residues 20–310 (YTVERVAGQG…PLDALCHPFF (291 aa)) enclose the Protein kinase domain. ATP contacts are provided by residues 26-34 (AGQGTFGTV) and Lys-49. Asp-152 functions as the Proton acceptor in the catalytic mechanism.

It belongs to the protein kinase superfamily. CMGC Ser/Thr protein kinase family. GSK-3 subfamily. As to quaternary structure, inhibited by cyclin kinase 2 (CDK2) inhibitors, including GW8510.

The catalysed reaction is L-seryl-[tau protein] + ATP = O-phospho-L-seryl-[tau protein] + ADP + H(+). The enzyme catalyses L-threonyl-[tau protein] + ATP = O-phospho-L-threonyl-[tau protein] + ADP + H(+). The polypeptide is Glycogen synthase kinase 3 (Trypanosoma brucei brucei (strain 927/4 GUTat10.1)).